The primary structure comprises 299 residues: Very long chain fatty acid elongase 5 (299 aa).

The residue at position 1 (Met-1) is an N-acetylmethionine. Transmembrane regions (helical) follow at residues 26-46 (WFLLDNYIPTFICSVIYLLIV), 64-84 (ILVVYNLGLTLLSLYMFCELV), 112-132 (VLWWYYFSKLIEFMDTFFFIL), 150-170 (MLNIWWFVMNWVPCGHSYFGA), 172-192 (LNSFIHVLMYSYYGLSSVLSM), 205-225 (GQLLQSVLTIIQTSCGVIWPC), and 226-246 (TFPLGWLYFQIGYMISLIALF). The tract at residues 262–299 (RKDHLKDHQNGSKAAVNGHTNSFSPLENNVKPRKLRKD) is disordered. Positions 279 to 288 (GHTNSFSPLE) are enriched in polar residues. Ser-285 carries the post-translational modification Phosphoserine.

It belongs to the ELO family. ELOVL5 subfamily. As to quaternary structure, interacts with TECR.

The protein resides in the endoplasmic reticulum membrane. It localises to the cell projection. Its subcellular location is the dendrite. The enzyme catalyses a very-long-chain acyl-CoA + malonyl-CoA + H(+) = a very-long-chain 3-oxoacyl-CoA + CO2 + CoA. It carries out the reaction (6Z,9Z,12Z)-octadecatrienoyl-CoA + malonyl-CoA + H(+) = (8Z,11Z,14Z)-3-oxoeicosatrienoyl-CoA + CO2 + CoA. It catalyses the reaction (9Z,12Z,15Z)-octadecatrienoyl-CoA + malonyl-CoA + H(+) = (11Z,14Z,17Z)-3-oxoeicosatrienoyl-CoA + CO2 + CoA. The catalysed reaction is (9Z)-hexadecenoyl-CoA + malonyl-CoA + H(+) = 3-oxo-(11Z)-octadecenoyl-CoA + CO2 + CoA. The enzyme catalyses (9Z)-octadecenoyl-CoA + malonyl-CoA + H(+) = 3-oxo-(11Z)-eicosenoyl-CoA + CO2 + CoA. It carries out the reaction (11Z)-octadecenoyl-CoA + malonyl-CoA + H(+) = 3-oxo-(13Z)-eicosenoyl-CoA + CO2 + CoA. It catalyses the reaction (9Z,12Z)-octadecadienoyl-CoA + malonyl-CoA + H(+) = (11Z,14Z)-3-oxoicosa-11,14-dienoyl-CoA + CO2 + CoA. The catalysed reaction is (6Z,9Z,12Z,15Z)-octadecatetraenoyl-CoA + malonyl-CoA + H(+) = (8Z,11Z,14Z,17Z)-3-oxoicosatetraenoyl-CoA + CO2 + CoA. The enzyme catalyses (5Z,8Z,11Z,14Z)-eicosatetraenoyl-CoA + malonyl-CoA + H(+) = (7Z,10Z,13Z,16Z)-3-oxodocosatetraenoyl-CoA + CO2 + CoA. It carries out the reaction (5Z,8Z,11Z,14Z,17Z)-eicosapentaenoyl-CoA + malonyl-CoA + H(+) = 3-oxo-(7Z,10Z,13Z,16Z,19Z)-docosapentaenoyl-CoA + CO2 + CoA. It functions in the pathway lipid metabolism; polyunsaturated fatty acid biosynthesis. Its function is as follows. Catalyzes the first and rate-limiting reaction of the four reactions that constitute the long-chain fatty acids elongation cycle. This endoplasmic reticulum-bound enzymatic process allows the addition of 2 carbons to the chain of long- and very long-chain fatty acids (VLCFAs) per cycle. Condensing enzyme that acts specifically toward polyunsaturated acyl-CoA with the higher activity toward C18:3(n-6) acyl-CoA. May participate in the production of monounsaturated and of polyunsaturated VLCFAs of different chain lengths that are involved in multiple biological processes as precursors of membrane lipids and lipid mediators. In conditions where the essential linoleic and alpha linoleic fatty acids are lacking it is also involved in the synthesis of Mead acid from oleic acid. The protein is Very long chain fatty acid elongase 5 of Pongo abelii (Sumatran orangutan).